Here is a 554-residue protein sequence, read N- to C-terminus: Chaperonin GroEL (554 aa).

ATP-binding positions include 29–32, Lys50, 86–90, Gly418, and Asp499; these read TLGP and DGTTT. A disordered region spans residues 528 to 554; sequence HEEDNNTNRSGGGVGGGHHGGMGGMDF. Residues 537 to 554 show a composition bias toward gly residues; the sequence is SGGGVGGGHHGGMGGMDF.

This sequence belongs to the chaperonin (HSP60) family. In terms of assembly, forms a cylinder of 14 subunits composed of two heptameric rings stacked back-to-back. Interacts with the co-chaperonin GroES.

It localises to the cytoplasm. It catalyses the reaction ATP + H2O + a folded polypeptide = ADP + phosphate + an unfolded polypeptide.. Functionally, together with its co-chaperonin GroES, plays an essential role in assisting protein folding. The GroEL-GroES system forms a nano-cage that allows encapsulation of the non-native substrate proteins and provides a physical environment optimized to promote and accelerate protein folding. The protein is Chaperonin GroEL of Orientia tsutsugamushi (strain Boryong) (Rickettsia tsutsugamushi).